Here is a 244-residue protein sequence, read N- to C-terminus: Protein-L-isoaspartate O-methyltransferase 2 (244 aa).

Ser88 is a catalytic residue.

Belongs to the methyltransferase superfamily. L-isoaspartyl/D-aspartyl protein methyltransferase family.

The protein localises to the cytoplasm. The catalysed reaction is [protein]-L-isoaspartate + S-adenosyl-L-methionine = [protein]-L-isoaspartate alpha-methyl ester + S-adenosyl-L-homocysteine. Its function is as follows. Catalyzes the methyl esterification of L-isoaspartyl residues in peptides and proteins that result from spontaneous decomposition of normal L-aspartyl and L-asparaginyl residues. It plays a role in the repair and/or degradation of damaged proteins. This chain is Protein-L-isoaspartate O-methyltransferase 2, found in Shewanella sediminis (strain HAW-EB3).